Consider the following 853-residue polypeptide: MLSGKKAAAAAAAAAAAAAAGTEAGSGAAGGAENGSEVAAPPAGLTGPTDMATGAAGERTPRKKEPPRASPPGGLAEPPGSAGPQAGPTAGPGSATPMETGIAETPEGRRTSRRKRAKVEYREMDESLANLSEDEYYSEEERNAKAEKEKKLPPPPPQAPPEEENESEPEEPSGVEGAAFQSRLPHDRMTSQEAACFPDIISGPQQTQKVFLFIRNRTLQLWLDNPKIQLTFEATLQQLEAPYNSDTVLVHRVHSYLERHGLINFGIYKRIKPLPIKKTGKVIIIGSGVSGLAAARQLQSFGMDVTLLEARDRVGGRVATFRKGNYVADLGAMVVTGLGGNPMAVVSKQVNMELAKIKQKCPLYEANGQAVPKEKDEMVEQEFNRLLEATSYLSHQLDFNVLNNKPVSLGQALEVVIQLQEKHVKDEQIEHWKKIVKTQEELKELLNKMVNLKEKIKELHQQYKEASEVKPPRDITAEFLVKSKHRDLTALCKEYDELAETQGKLEEKLQELEANPPSDVYLSSRDRQILDWHFANLEFANATPLSTLSLKHWDQDDDFEFTGSHLTVRNGYSCVPVALAEGLDIKLNTAVRQVRYTASGCEVIAVNTRSTSQTFIYKCDAVLCTLPLGVLKQQPPAVQFVPPLPEWKTSAVQRMGFGNLNKVVLCFDRVFWDPSVNLFGHVGSTTASRGELFLFWNLYKAPILLALVAGEAAGIMENISDDVIVGRCLAILKGIFGSSAVPQPKETVVSRWRADPWARGSYSYVAAGSSGNDYDLMAQPITPGPSIPGAPQPIPRLFFAGEHTIRNYPATVHGALLSGLREAGRIADQFLGAMYTLPRQATPGVPAQQSPSM.

The segment at 1 to 177 (MLSGKKAAAA…EPEEPSGVEG (177 aa)) is disordered. The span at 7–26 (AAAAAAAAAAAAAAGTEAGS) shows a compositional bias: low complexity. Residue Thr-60 is modified to Phosphothreonine. Positions 76–97 (AEPPGSAGPQAGPTAGPGSATP) are enriched in low complexity. The residue at position 105 (Thr-105) is a Phosphothreonine. Positions 111–152 (TSRRKRAKVEYREMDESLANLSEDEYYSEEERNAKAEKEKKL) form a coiled coil. Phosphoserine occurs at positions 127 and 132. Tyr-136 bears the Phosphotyrosine mark. A Phosphoserine modification is found at Ser-138. The span at 139–152 (EEERNAKAEKEKKL) shows a compositional bias: basic and acidic residues. Residues 161 to 173 (PEEENESEPEEPS) are compositionally biased toward acidic residues. Ser-167 is subject to Phosphoserine. The SWIRM domain maps to 175 to 274 (VEGAAFQSRL…FGIYKRIKPL (100 aa)). FAD is bound by residues Ser-290, Glu-309, Arg-311, Arg-317, and 333–334 (MV). Residues 301-853 (FGMDVTLLEA…GVPAQQSPSM (553 aa)) form a demethylase activity region. The stretch at 429–515 (IEHWKKIVKT…EEKLQELEAN (87 aa)) forms a coiled coil. Lys-433, Lys-434, and Lys-437 each carry N6-acetyllysine. Residues Lys-443 and Lys-470 each participate in a glycyl lysine isopeptide (Lys-Gly) (interchain with G-Cter in SUMO2) cross-link. Lys-504 participates in a covalent cross-link: Glycyl lysine isopeptide (Lys-Gly) (interchain with G-Cter in ubiquitin). A Phosphoserine modification is found at Ser-612. FAD contacts are provided by residues Glu-802 and 811–812 (TV). A Phosphoserine modification is found at Ser-850.

This sequence belongs to the flavin monoamine oxidase family. In terms of assembly, component of a histone demethylase complex with RCOR1. Component of a BHC histone deacetylase complex that contains HDAC1, HDAC2, HMG20B, KDM1A, RCOR1 and PHF21A. The BHC complex may also contain ZMYM2, ZNF217, ZMYM3, GSE1 and GTF2I. In the complex, RCOR1 strongly enhances the demethylase activity and protects it from the proteasome while PHF21A inhibits the demethylase activity. Interacts with the androgen receptor (AR). Component of a RCOR/GFI/KDM1A/HDAC complex. Interacts directly with GFI1 and GFI1B. Interacts with SNAI1 (via SNAG domain). Interacts with INSM1. Interacts (via AOD/Tower domain) with JADE2 (via C-terminus). Interacts with ESRRB; co-occupes the core set of ESRRB targets. Interacts with SAMD1 (via WH domain); the interaction modulates KDM1A function. Interacts with RBPJ. Interacts with L3MBTL3. Interacts with ZMYND8. The cofactor is FAD. Acetylated by KAT8 in epithelial but not in mesenchymal cells, thereby regulating the epithelial-to-mesenchymal transition. Acetylation by KAT8 reduces KDM1A association with nucleosomes, thereby decreasing histone H3 demethylation, leading to transcription activatio of target genes. In terms of processing, polyubiquitinated by JADE2; which leads to its proteasomal degradation. Deubiquitinated by USP38; preventing it from degradation by the 26S proteasome. In terms of tissue distribution, ubiquitously expressed.

The protein localises to the nucleus. The protein resides in the chromosome. It carries out the reaction N(6),N(6)-dimethyl-L-lysyl(4)-[histone H3] + 2 A + 2 H2O = L-lysyl(4)-[histone H3] + 2 formaldehyde + 2 AH2. The N-terminal sequences of INSM1 and SNAI1 compete with histone H3 for the same binding site and thereby inhibit histone demethylation (in vitro). Histone demethylase that can demethylate both 'Lys-4' (H3K4me) and 'Lys-9' (H3K9me) of histone H3, thereby acting as a coactivator or a corepressor, depending on the context. Acts by oxidizing the substrate by FAD to generate the corresponding imine that is subsequently hydrolyzed. Acts as a corepressor by mediating demethylation of H3K4me, a specific tag for epigenetic transcriptional activation. Demethylates both mono- (H3K4me1) and di-methylated (H3K4me2) H3K4me. May play a role in the repression of neuronal genes. Alone, it is unable to demethylate H3K4me on nucleosomes and requires the presence of RCOR1/CoREST to achieve such activity. Also acts as a coactivator of androgen receptor (ANDR)-dependent transcription, by being recruited to ANDR target genes and mediating demethylation of H3K9me, a specific tag for epigenetic transcriptional repression. The presence of PRKCB in ANDR-containing complexes, which mediates phosphorylation of 'Thr-6' of histone H3 (H3T6ph), a specific tag that prevents demethylation H3K4me, prevents H3K4me demethylase activity of KDM1A. Demethylates di-methylated 'Lys-370' of p53/TP53 which prevents interaction of p53/TP53 with TP53BP1 and represses p53/TP53-mediated transcriptional activation. Demethylates and stabilizes the DNA methylase DNMT1. Demethylates methylated 'Lys-44' and methylated 'Lys-119' of SOX2. Required for gastrulation during embryogenesis. Component of a RCOR/GFI/KDM1A/HDAC complex that suppresses, via histone deacetylase (HDAC) recruitment, a number of genes implicated in multilineage blood cell development. Facilitates epithelial-to-mesenchymal transition by acting as an effector of SNAI1-mediated transcription repression of epithelial markers E-cadherin/CDH1, CDN7 and KRT8. Required for the maintenance of the silenced state of the SNAI1 target genes E-cadherin/CDH1 and CDN7. Required for the repression of GIPR expression. This chain is Lysine-specific histone demethylase 1A, found in Mus musculus (Mouse).